A 238-amino-acid chain; its full sequence is Probable transcriptional regulatory protein YeeN (238 aa).

This sequence belongs to the TACO1 family. YeeN subfamily.

It localises to the cytoplasm. The sequence is that of Probable transcriptional regulatory protein YeeN from Escherichia coli (strain UTI89 / UPEC).